A 617-amino-acid polypeptide reads, in one-letter code: Proline--tRNA ligase (617 aa).

The protein belongs to the class-II aminoacyl-tRNA synthetase family. ProS type 1 subfamily. As to quaternary structure, homodimer.

The protein resides in the cytoplasm. It catalyses the reaction tRNA(Pro) + L-proline + ATP = L-prolyl-tRNA(Pro) + AMP + diphosphate. In terms of biological role, catalyzes the attachment of proline to tRNA(Pro) in a two-step reaction: proline is first activated by ATP to form Pro-AMP and then transferred to the acceptor end of tRNA(Pro). As ProRS can inadvertently accommodate and process non-cognate amino acids such as alanine and cysteine, to avoid such errors it has two additional distinct editing activities against alanine. One activity is designated as 'pretransfer' editing and involves the tRNA(Pro)-independent hydrolysis of activated Ala-AMP. The other activity is designated 'posttransfer' editing and involves deacylation of mischarged Ala-tRNA(Pro). The misacylated Cys-tRNA(Pro) is not edited by ProRS. This chain is Proline--tRNA ligase, found in Streptococcus pneumoniae serotype 4 (strain ATCC BAA-334 / TIGR4).